The following is a 655-amino-acid chain: p-hydroxybenzoic acid efflux pump subunit AaeB (655 aa).

11 consecutive transmembrane segments (helical) span residues 13-33 (FAVK…HFQL), 38-58 (WAVL…GGEP), 69-89 (LRII…IAMI), 93-113 (LLMI…SSLV), 121-141 (WGLA…EPLL), 152-172 (EIVI…PRSI), 370-390 (LFWL…IAVV), 407-427 (FIYG…VIIP), 431-451 (QSML…GIEV), 455-475 (LLGS…DNPM), and 482-502 (FLDS…VILL).

This sequence belongs to the aromatic acid exporter ArAE (TC 2.A.85) family.

It localises to the cell inner membrane. In terms of biological role, forms an efflux pump with AaeA. Could function as a metabolic relief valve, allowing to eliminate certain compounds when they accumulate to high levels in the cell. The chain is p-hydroxybenzoic acid efflux pump subunit AaeB from Shigella boydii serotype 4 (strain Sb227).